The sequence spans 186 residues: Protein C (186 aa).

Over residues 1–15 (MSKTDWNASGLSRPS) the composition is skewed to polar residues. A disordered region spans residues 1–44 (MSKTDWNASGLSRPSPSAHWPSRKLWQHGQKYQTTQDRSEPPAG).

It belongs to the morbillivirus protein C family. Interacts with the phosphoprotein (via C-terminus); this interaction allows C to associate with the ribonucleocapsid.

It localises to the host nucleus. The protein localises to the host cytoplasmic vesicle. Functionally, ribonucleocapsid-associated protein that interacts with the phosphoprotein (P), thereby increasing replication accuracy and processivity of the polymerase complex. This is Protein C (P/V/C) from Homo sapiens (Human).